The chain runs to 243 residues: tRNA pseudouridine synthase A (243 aa).

The active-site Nucleophile is the Asp54. Tyr112 is a substrate binding site.

It belongs to the tRNA pseudouridine synthase TruA family. As to quaternary structure, homodimer.

The catalysed reaction is uridine(38/39/40) in tRNA = pseudouridine(38/39/40) in tRNA. In terms of biological role, formation of pseudouridine at positions 38, 39 and 40 in the anticodon stem and loop of transfer RNAs. This Onion yellows phytoplasma (strain OY-M) protein is tRNA pseudouridine synthase A.